The chain runs to 439 residues: Serine/threonine-protein kinase 2 (439 aa).

The 353-residue stretch at 87 to 439 (NDDFYHISTG…IFSDWINGGN (353 aa)) folds into the Protein kinase domain. ATP-binding positions include 93-101 (ISTGGYGIV) and K117. D307 serves as the catalytic Proton acceptor.

Belongs to the protein kinase superfamily. Ser/Thr protein kinase family. Post-translationally, phosphorylated in vivo. Autophosphorylated in vitro.

It is found in the host endoplasmic reticulum. Its subcellular location is the host endoplasmic reticulum-Golgi intermediate compartment. The catalysed reaction is L-seryl-[protein] + ATP = O-phospho-L-seryl-[protein] + ADP + H(+). The enzyme catalyses L-threonyl-[protein] + ATP = O-phospho-L-threonyl-[protein] + ADP + H(+). Essential serine-protein kinase involved in the early stage of virion morphogenesis. This chain is Serine/threonine-protein kinase 2 (OPG054), found in Vaccinia virus (strain Tian Tan) (VACV).